The sequence spans 102 residues: Mitochondrial import inner membrane translocase subunit Tim10 B (102 aa).

Positions 27 to 51 match the Twin CX3C motif motif; it reads CFQRCVPSLHHRALDAEEEACLHSC. 2 cysteine pairs are disulfide-bonded: Cys27-Cys51 and Cys31-Cys47.

As to quaternary structure, component of the TIM22 complex, which core is composed of TIMM22, associated with TIMM10 (TIMM10A and/or TIMM10B), TIMM9, AGK and TIMM29.

It is found in the mitochondrion inner membrane. Its function is as follows. Component of the TIM22 complex, a complex that mediates the import and insertion of multi-pass transmembrane proteins into the mitochondrial inner membrane. The TIM22 complex forms a twin-pore translocase that uses the membrane potential as the external driving force. In the TIM22 complex, it may act as a docking point for the soluble 70 kDa complex that guides the target proteins in transit through the aqueous mitochondrial intermembrane space. This Pongo abelii (Sumatran orangutan) protein is Mitochondrial import inner membrane translocase subunit Tim10 B (TIMM10B).